The sequence spans 252 residues: Proteasome subunit alpha 1 (252 aa).

Met-1 is subject to N-acetylmethionine; alternate.

The protein belongs to the peptidase T1A family. The 20S proteasome core is composed of 14 alpha and 14 beta subunits that assemble into four stacked heptameric rings, resulting in a barrel-shaped structure. The two inner rings, each composed of seven catalytic beta subunits, are sandwiched by two outer rings, each composed of seven alpha subunits. H.volcanii produces at least 2 types of 20S proteasomes: an alpha1-beta proteasome and a proteasome containing all three subunits (alpha1, alpha2, and beta) that appears to be asymmetrical with homo-oligomeric alpha1 and alpha2 rings positioned on separate ends. The catalytic chamber with the active sites is on the inside of the barrel. Has probably a gated structure, the ends of the cylinder being occluded by the N-termini of the alpha-subunits. Is likely capped at one or both ends by the proteasome regulatory ATPase, PAN. In terms of processing, acetylated. The acetylated form at Met-1 was shown to be in 100-fold excess of the unacetylated form with the initiator methionine removed in whole cells and purified 20S proteasomes.

The protein resides in the cytoplasm. The formation of the proteasomal ATPase PAN-20S proteasome complex, via the docking of the C-termini of PAN into the intersubunit pockets in the alpha-rings, triggers opening of the gate for substrate entry. Interconversion between the open-gate and close-gate conformations leads to a dynamic regulation of the 20S proteasome proteolysis activity. In vitro, the chymotrypsin-like activity of the alpha1-beta proteasome is potently inhibited by carbobenzoxyl-leucinyl-leucinyl-leucinal-H (MG132) and significantly by N-acetyl-leucinyl-leucinyl-norleucinal-H (calpain inhibitor I). In terms of biological role, component of the proteasome core, a large protease complex with broad specificity involved in protein degradation. The H.volcanii alpha1-beta proteasome is able to cleave oligopeptides after Phe, Tyr and Trp, poorly after Glu but not after Arg. Thus, displays chymotrypsin-like activity, low caspase-like activity but no trypsin-like activity. In Haloferax volcanii (strain ATCC 29605 / DSM 3757 / JCM 8879 / NBRC 14742 / NCIMB 2012 / VKM B-1768 / DS2) (Halobacterium volcanii), this protein is Proteasome subunit alpha 1.